A 362-amino-acid polypeptide reads, in one-letter code: Probable protein phosphatase 2C 24 (362 aa).

Residues 77–360 (RYGVSSVCGR…DNVSVVVIDL (284 aa)) form the PPM-type phosphatase domain. Mn(2+) is bound by residues Asp-117, Gly-118, Asp-295, and Asp-351.

It belongs to the PP2C family. The cofactor is Mg(2+). Mn(2+) serves as cofactor.

The catalysed reaction is O-phospho-L-seryl-[protein] + H2O = L-seryl-[protein] + phosphate. The enzyme catalyses O-phospho-L-threonyl-[protein] + H2O = L-threonyl-[protein] + phosphate. In Arabidopsis thaliana (Mouse-ear cress), this protein is Probable protein phosphatase 2C 24.